Here is a 122-residue protein sequence, read N- to C-terminus: Acyl carrier protein 1, mitochondrial (122 aa).

The transit peptide at 1 to 34 directs the protein to the mitochondrion; the sequence is MALRNAILRHLRVPVQTLGLNQSKIGFLGTIRSF. The Carrier domain maps to 44-119; it reads EAVVDRVLDV…LAIEYVYNHP (76 aa). O-(pantetheine 4'-phosphoryl)serine is present on S79.

It belongs to the acyl carrier protein (ACP) family. Complex I is composed of at least 49 different subunits. Post-translationally, 4'-phosphopantetheine is transferred from CoA to a specific serine of the apo-ACP-like protein.

The protein resides in the mitochondrion. It functions in the pathway lipid metabolism; fatty acid biosynthesis. Functionally, carrier of the growing fatty acid chain in fatty acid biosynthesis. May be involved in the synthesis of short and medium chain fatty acids. Accessory and non-catalytic subunit of the mitochondrial membrane respiratory chain NADH dehydrogenase (Complex I), which functions in the transfer of electrons from NADH to the respiratory chain. In Arabidopsis thaliana (Mouse-ear cress), this protein is Acyl carrier protein 1, mitochondrial (MTACP1).